We begin with the raw amino-acid sequence, 219 residues long: Phosphatidylserine decarboxylase proenzyme (219 aa).

Ser-188 acts as the Schiff-base intermediate with substrate; via pyruvic acid in catalysis. Ser-188 is modified (pyruvic acid (Ser); by autocatalysis).

It belongs to the phosphatidylserine decarboxylase family. PSD-A subfamily. Heterodimer of a large membrane-associated beta subunit and a small pyruvoyl-containing alpha subunit. The cofactor is pyruvate. In terms of processing, is synthesized initially as an inactive proenzyme. Formation of the active enzyme involves a self-maturation process in which the active site pyruvoyl group is generated from an internal serine residue via an autocatalytic post-translational modification. Two non-identical subunits are generated from the proenzyme in this reaction, and the pyruvate is formed at the N-terminus of the alpha chain, which is derived from the carboxyl end of the proenzyme. The post-translation cleavage follows an unusual pathway, termed non-hydrolytic serinolysis, in which the side chain hydroxyl group of the serine supplies its oxygen atom to form the C-terminus of the beta chain, while the remainder of the serine residue undergoes an oxidative deamination to produce ammonia and the pyruvoyl prosthetic group on the alpha chain.

It is found in the cell membrane. It carries out the reaction a 1,2-diacyl-sn-glycero-3-phospho-L-serine + H(+) = a 1,2-diacyl-sn-glycero-3-phosphoethanolamine + CO2. It participates in phospholipid metabolism; phosphatidylethanolamine biosynthesis; phosphatidylethanolamine from CDP-diacylglycerol: step 2/2. Catalyzes the formation of phosphatidylethanolamine (PtdEtn) from phosphatidylserine (PtdSer). This Ruegeria pomeroyi (strain ATCC 700808 / DSM 15171 / DSS-3) (Silicibacter pomeroyi) protein is Phosphatidylserine decarboxylase proenzyme.